Reading from the N-terminus, the 196-residue chain is Calcineurin B homologous protein 2 (196 aa).

A lipid anchor (N-myristoyl glycine) is attached at Gly2. EF-hand domains are found at residues 26-61, 71-106, 111-146, and 152-187; these read ASLL…AVNP, FPDG…PKKP, SRRN…MVGV, and QLEN…MDVE. Ser27 is modified (phosphoserine). The Ca(2+) site is built by Asp124, Asp126, Asp128, Lys130, and Glu135. The Nuclear export signal motif lies at 137-148; that stretch reads LQVLRLMVGVQV. Ca(2+) is bound by residues Asp165, Asp167, Asp169, and Glu176.

It belongs to the calcineurin regulatory subunit family. CHP subfamily. As to quaternary structure, interacts with PPP3CA. Interacts with SLC9A1/NHE1; the interaction occurs in a calcium-dependent manner. As to expression, expressed in malignantly transformed cells but not detected in normal tissues.

Its subcellular location is the nucleus. The protein resides in the cytoplasm. It localises to the cell membrane. Its function is as follows. Functions as an integral cofactor in cell pH regulation by controlling plasma membrane-type Na(+)/H(+) exchange activity. Binds to and activates SLC9A1/NHE1 in a serum-independent manner, thus increasing pH and protecting cells from serum deprivation-induced death. Also plays a role in the regulation of cell proliferation and tumor growth by increasing the phosphatase activity of PPP3CA in a calcium-dependent manner. Activator of the calcineurin/NFAT signaling pathway. Involved in the cytoplasmic translocation of the transcription factor NFATC3 to the nucleus. The sequence is that of Calcineurin B homologous protein 2 (CHP2) from Homo sapiens (Human).